We begin with the raw amino-acid sequence, 217 residues long: Translation initiation factor 6 (217 aa).

Belongs to the eIF-6 family.

In terms of biological role, binds to the 50S ribosomal subunit and prevents its association with the 30S ribosomal subunit to form the 70S initiation complex. The sequence is that of Translation initiation factor 6 from Methanococcoides burtonii (strain DSM 6242 / NBRC 107633 / OCM 468 / ACE-M).